A 554-amino-acid chain; its full sequence is 3-(3-hydroxy-phenyl)propionate/3-hydroxycinnamic acid hydroxylase (554 aa).

Residues 17–46 (QVAI…VVEK) and 285–295 (FRIDRVLLAGD) each bind FAD.

Belongs to the PheA/TfdB FAD monooxygenase family. The cofactor is FAD.

The catalysed reaction is 3-(3-hydroxyphenyl)propanoate + NADH + O2 + H(+) = 3-(2,3-dihydroxyphenyl)propanoate + NAD(+) + H2O. It carries out the reaction (2E)-3-(3-hydroxyphenyl)prop-2-enoate + NADH + O2 + H(+) = (2E)-3-(2,3-dihydroxyphenyl)prop-2-enoate + NAD(+) + H2O. The protein operates within aromatic compound metabolism; 3-phenylpropanoate degradation. Functionally, catalyzes the insertion of one atom of molecular oxygen into position 2 of the phenyl ring of 3-(3-hydroxyphenyl)propionate (3-HPP) and hydroxycinnamic acid (3HCI). In Escherichia coli O17:K52:H18 (strain UMN026 / ExPEC), this protein is 3-(3-hydroxy-phenyl)propionate/3-hydroxycinnamic acid hydroxylase.